Here is a 500-residue protein sequence, read N- to C-terminus: Cytochrome P450 6B4 (500 aa).

Cys443 provides a ligand contact to heme.

It belongs to the cytochrome P450 family. It depends on heme as a cofactor.

It is found in the endoplasmic reticulum membrane. It localises to the microsome membrane. The enzyme catalyses an organic molecule + reduced [NADPH--hemoprotein reductase] + O2 = an alcohol + oxidized [NADPH--hemoprotein reductase] + H2O + H(+). Its function is as follows. Enables the insect to feed on furanocoumarin-producing plants and evolved as an adaptation for detoxification of xanthotoxin and other furanocoumarins. This isozyme metabolizes isopimpinellin, imperatorin, and bergapten at high rates, xanthotoxin and psoralen at intermediate rates and angelicin, sphondin, and trioxsalen only at very low rates. This chain is Cytochrome P450 6B4 (CYP6B4), found in Papilio glaucus (Eastern tiger swallowtail butterfly).